We begin with the raw amino-acid sequence, 1122 residues long: Protein CAF130 (1122 aa).

The tract at residues 1–24 (MTKKKAATNYAERQNLASEDSSGD) is disordered. A compositionally biased stretch (polar residues) spans 11–24 (AERQNLASEDSSGD). At Ser-1042 the chain carries Phosphoserine.

In terms of assembly, subunit of the 1.0 MDa CCR4-NOT core complex that contains CCR4, CAF1, NOT1, NOT2, NOT3, NOT4, NOT5, CAF40 and CAF130. In the complex interacts with NOT1. The core complex probably is part of a less characterized 1.9 MDa CCR4-NOT complex.

The protein localises to the cytoplasm. Its subcellular location is the nucleus. Its function is as follows. Acts as a component of the CCR4-NOT core complex, which in the nucleus seems to be a general transcription factor, and in the cytoplasm the major mRNA deadenylase involved in mRNA turnover. In Saccharomyces cerevisiae (strain ATCC 204508 / S288c) (Baker's yeast), this protein is Protein CAF130 (CAF130).